The chain runs to 4128 residues: DNA-dependent protein kinase catalytic subunit (4128 aa).

K117 is modified (N6-acetyllysine). An HEAT 1 repeat occupies 288–323; sequence DNYITLFEVLSKWCSHTNVELKKAAHSALESFLRQI. S511, S686, S840, and S891 each carry phosphoserine. HEAT repeat units follow at residues 1001–1037 and 1050–1086; these read QDTV…LKWS and PVNS…YKEF. Phosphoserine is present on S1062. At K1206 the chain carries N6-acetyllysine. The interval 1501–1536 is interaction with C1D; that stretch reads LDPSCKSLANGLLELAFGFGGLCDHLVSLLLNSAML. A leucine-zipper region spans residues 1501–1536; the sequence is LDPSCKSLANGLLELAFGFGGLCDHLVSLLLNSAML. The TPR 1 repeat unit spans residues 1720 to 1753; sequence PMKSDEFPPDSLKYNNYVDCMKKFLDALELSQSP. K1967 bears the N6-acetyllysine mark. A disordered region spans residues 2049-2071; sequence YSYSSQDRKPTTGHFQRREHQDS. Residue S2053 is modified to Phosphoserine; by autocatalysis. The segment covering 2054–2070 has biased composition (basic and acidic residues); sequence QDRKPTTGHFQRREHQD. K2255 is modified (N6-acetyllysine). The KIP-binding stretch occupies residues 2432–3213; that stretch reads LDIVYKMVAK…DHSMSVDEDE (782 aa). T2531 carries the phosphothreonine modification. T2605 is modified (phosphothreonine; by autocatalysis). Phosphoserine; by autocatalysis is present on S2608. The disordered stretch occupies residues 2614–2635; sequence TQTQEGPLSDQRQKPGQVRATQ. Residues T2634 and T2643 each carry the phosphothreonine; by autocatalysis modification. The tract at residues 2738–2766 is may split the end of the DNA molecule, with the two strands separating around the region; the sequence is EKLSLLYAKRGLMEQKLEKDIKSEFKMKQ. Positions 2907 to 3539 constitute an FAT domain; sequence PTKRVRGKTC…IYPFIISSES (633 aa). 2 TPR repeats span residues 2921-2954 and 2956-2983; these read VLRW…TQDT and NALL…LEWV. At S3206 the chain carries Phosphoserine. Residues K3241, K3260, K3638, and K3642 each carry the N6-acetyllysine modification. Residues 3722-4053 enclose the PI3K/PI4K catalytic domain; that stretch reads FDERVKVMLS…IRYAKRKLAG (332 aa). Positions 3728-3734 are G-loop; that stretch reads VMLSLRK. Phosphoserine occurs at positions 3731 and 3821. The tract at residues 3919 to 3927 is catalytic loop; the sequence is GIGDRHLNN. Positions 3939-3964 are activation loop; it reads GIDFGHAFGSATQFLPVPELMPFRLT. S4026 is modified (phosphoserine). The FATC domain occupies 4096 to 4128; it reads SGLSEETQVKCLVDQATDPNILGRTWEGWEPWM.

It belongs to the PI3/PI4-kinase family. DNA-PK is a heterotrimer of PRKDC and the Ku dimer (composed of XRCC6/Ku70 and XRCC5/Ku86). Formation of this complex may be promoted by interaction with ILF3. Component of the core long-range non-homologous end joining (NHEJ) complex (also named DNA-PK complex) composed of PRKDC, LIG4, XRCC4, XRCC6/Ku70, XRCC5/Ku86 and NHEJ1/XLF. Additional component of the NHEJ complex includes PAXX. Following autophosphorylation, PRKDC dissociates from DNA. Interacts with DNA-PKcs-interacting protein (KIP) with the region upstream the kinase domain. PRKDC alone also interacts with and phosphorylates DCLRE1C, thereby activating the latent endonuclease activity of this protein. Interacts with C1D. Interacts with TTI1 and TELO2. Interacts with CIB1. Interacts with SETX. Interacts with NR4A3; the DNA-dependent protein kinase complex DNA-PK phosphorylates and activates NR4A3 and prevents NR4A3 ubiquitination and degradation. Interacts with BRAT1. Part of the HDP-RNP complex composed of at least HEXIM1, PRKDC, XRCC5, XRCC6, paraspeckle proteins (SFPQ, NONO, PSPC1, RBM14, and MATR3) and NEAT1 RNA. Interacts with KAT5. In terms of processing, autophosphorylated at two clusters, the T2609 cluster and the S2056 cluster. Autophosphorylated on Ser-2053, Thr-2605, Thr-2634 and Thr-2643. Ser-2053 and Thr-2605 are DNA damage-inducible phosphorylation sites (inducible with ionizing radiation, IR) dephosphorylated by PPP5C. Autophosphorylation induces a conformational change that leads to remodeling of the DNA-PK complex, requisite for efficient end processing and DNA repair. Autophosphorylation in trans within DNA-PK complexes loaded on DNA ends leads to the dissociation of PRKDC from DNA and the transition into the short-range NHEJ complex. Autophosphorylation of the T2609 cluster is required for hematopoietic development and protein synthesis in erythrocytes precursors. S-nitrosylated by GAPDH. Post-translationally, polyubiquitinated by RNF144A, leading to proteasomal degradation.

The protein localises to the nucleus. It is found in the nucleolus. Its subcellular location is the cytoplasm. It localises to the cytosol. It carries out the reaction L-seryl-[protein] + ATP = O-phospho-L-seryl-[protein] + ADP + H(+). It catalyses the reaction L-threonyl-[protein] + ATP = O-phospho-L-threonyl-[protein] + ADP + H(+). Its activity is regulated as follows. Activity seems to be attenuated by autophosphorylation. Binding to the SL1 region of U3 small nucleolar RNA promotes auto-phosphorylation activity. Inhibited by wortmannin. Serine/threonine-protein kinase that acts as a molecular sensor for DNA damage. Involved in DNA non-homologous end joining (NHEJ) required for double-strand break (DSB) repair and V(D)J recombination. Must be bound to DNA to express its catalytic properties. Promotes processing of hairpin DNA structures in V(D)J recombination by activation of the hairpin endonuclease artemis (DCLRE1C). Recruited by XRCC5 and XRCC6 to DNA ends and is required to (1) protect and align broken ends of DNA, thereby preventing their degradation, (2) and sequester the DSB for repair by NHEJ. Acts as a scaffold protein to aid the localization of DNA repair proteins to the site of damage. The assembly of the DNA-PK complex at DNA ends is also required for the NHEJ ligation step. Found at the ends of chromosomes, suggesting a further role in the maintenance of telomeric stability and the prevention of chromosomal end fusion. Also involved in modulation of transcription. As part of the DNA-PK complex, involved in the early steps of ribosome assembly by promoting the processing of precursor rRNA into mature 18S rRNA in the small-subunit processome. Binding to U3 small nucleolar RNA, recruits PRKDC and XRCC5/Ku86 to the small-subunit processome. Recognizes the substrate consensus sequence [ST]-Q. Phosphorylates 'Ser-139' of histone variant H2AX, thereby regulating DNA damage response mechanism. Phosphorylates ASF1A, DCLRE1C, c-Abl/ABL1, histone H1, HSPCA, c-jun/JUN, p53/TP53, PARP1, POU2F1, DHX9, FH, SRF, NHEJ1/XLF, XRCC1, XRCC4, XRCC5, XRCC6, WRN, MYC and RFA2. Can phosphorylate C1D not only in the presence of linear DNA but also in the presence of supercoiled DNA. Ability to phosphorylate p53/TP53 in the presence of supercoiled DNA is dependent on C1D. Acts as a regulator of the phosphatidylinositol 3-kinase/protein kinase B signal transduction by mediating phosphorylation of 'Ser-473' of protein kinase B (PKB/AKT1, PKB/AKT2, PKB/AKT3), promoting their activation. Contributes to the determination of the circadian period length by antagonizing phosphorylation of CRY1 'Ser-588' and increasing CRY1 protein stability, most likely through an indirect mechanism. Plays a role in the regulation of DNA virus-mediated innate immune response by assembling into the HDP-RNP complex, a complex that serves as a platform for IRF3 phosphorylation and subsequent innate immune response activation through the cGAS-STING pathway. Also regulates the cGAS-STING pathway by catalyzing phosphorylation of CGAS, thereby impairing CGAS oligomerization and activation. Also regulates the cGAS-STING pathway by mediating phosphorylation of PARP1. This Mus musculus (Mouse) protein is DNA-dependent protein kinase catalytic subunit (Prkdc).